Here is a 421-residue protein sequence, read N- to C-terminus: Probable G-protein coupled receptor 151 (421 aa).

At 1–44 the chain is on the extracellular side; it reads MGKATLAVFADSDSSNMNESFAHLHFAGGYLPSDSKGWRTIIPS. N-linked (GlcNAc...) asparagine glycosylation occurs at asparagine 18. Residues 45 to 65 traverse the membrane as a helical segment; the sequence is LLAAVCLVGFVGNLCVIGLLL. Topologically, residues 66-74 are cytoplasmic; the sequence is HGVWKRKPS. Residues 75–95 traverse the membrane as a helical segment; that stretch reads MIHSLILNLSLADISLLLFSA. Residues 96 to 122 lie on the Extracellular side of the membrane; that stretch reads PVRATAYVKGVWDLGWFVCKSSDWFTH. A disulfide bond links cysteine 114 and cysteine 190. Residues 123–143 form a helical membrane-spanning segment; the sequence is MCMAAKSLTFVVVAKVCFMYA. Topologically, residues 144 to 156 are cytoplasmic; sequence SDPAKPVGTHNCT. A helical membrane pass occupies residues 157 to 177; it reads IWSLLGAIWVVASLLPLPEWF. The Extracellular segment spans residues 178-204; the sequence is FSTTRHHAGVEMCLVDVPAVAAEFMSL. A helical membrane pass occupies residues 205 to 225; that stretch reads FGKLYPLLVFCLPLLLAGFYF. The Cytoplasmic segment spans residues 226 to 258; it reads WRAYNQCKIRCAKTQNLRNQMRSKQLTVMLLST. Residues 259-279 form a helical membrane-spanning segment; it reads AVTSALLWLPEWIAWLWVWHL. Residues 280-289 lie on the Extracellular side of the membrane; that stretch reads KAGGPMPPQG. A helical transmembrane segment spans residues 290–310; it reads FIALSQVLMFSISTVNPLIFL. Residues 311–421 lie on the Cytoplasmic side of the membrane; it reads MMSEEFKAGL…HEGQETKGCN (111 aa). Disordered regions lie at residues 346-381 and 394-421; these read IETL…TDKV and HERD…KGCN. Composition is skewed to basic and acidic residues over residues 364–379 and 409–421; these read DTDR…ETTD and PWEH…KGCN.

Belongs to the G-protein coupled receptor 1 family. Exclusively expressed in neurons of the habenular complex. The expression is particularly prominent in the medial habenular nucleus, whereas the lateral habenular nucleus exhibited a lower level of expression.

The protein localises to the cell membrane. Its function is as follows. Orphan receptor. This is Probable G-protein coupled receptor 151 (Gpr151) from Rattus norvegicus (Rat).